Reading from the N-terminus, the 487-residue chain is Polyamine oxidase 4 (487 aa).

Positions 53, 61, 242, and 429 each coordinate FAD. The Microbody targeting signal motif lies at 485–487 (CRT).

The protein belongs to the flavin monoamine oxidase family. The cofactor is FAD. As to expression, widely expressed.

Its subcellular location is the peroxisome. The enzyme catalyses spermine + O2 + H2O = 3-aminopropanal + spermidine + H2O2. The catalysed reaction is norspermine + O2 + H2O = norspermidine + 3-aminopropanal + H2O2. It carries out the reaction thermospermine + O2 + H2O = 3-aminopropanal + spermidine + H2O2. The protein operates within amine and polyamine degradation; spermine degradation. Functionally, flavoenzyme involved in polyamine back-conversion. Catalyzes the oxidation of the secondary amino group of polyamines, such as spermine. Substrate preference is spermine &gt; thermospermine &gt; norspermine. No activity detected when putrescine, spermidine or N(1)-acetylspermidine are used as substrates. Plays an important role in the regulation of polyamine intracellular concentration. The protein is Polyamine oxidase 4 of Oryza sativa subsp. japonica (Rice).